The chain runs to 513 residues: ATP synthase subunit alpha (513 aa).

169-176 lines the ATP pocket; that stretch reads GDRQTGKT.

The protein belongs to the ATPase alpha/beta chains family. As to quaternary structure, F-type ATPases have 2 components, CF(1) - the catalytic core - and CF(0) - the membrane proton channel. CF(1) has five subunits: alpha(3), beta(3), gamma(1), delta(1), epsilon(1). CF(0) has three main subunits: a(1), b(2) and c(9-12). The alpha and beta chains form an alternating ring which encloses part of the gamma chain. CF(1) is attached to CF(0) by a central stalk formed by the gamma and epsilon chains, while a peripheral stalk is formed by the delta and b chains.

The protein resides in the cell inner membrane. The enzyme catalyses ATP + H2O + 4 H(+)(in) = ADP + phosphate + 5 H(+)(out). Its function is as follows. Produces ATP from ADP in the presence of a proton gradient across the membrane. The alpha chain is a regulatory subunit. The sequence is that of ATP synthase subunit alpha from Ralstonia nicotianae (strain ATCC BAA-1114 / GMI1000) (Ralstonia solanacearum).